A 274-amino-acid polypeptide reads, in one-letter code: Nitrate import ATP-binding protein NrtD (274 aa).

Residues 17-250 (LHFDCVGKTF…RPREREAVVE (234 aa)) form the ABC transporter domain. Residue 53-60 (GHSGCGKS) coordinates ATP.

The protein belongs to the ABC transporter superfamily. Nitrate/nitrite/cyanate uptake transporter (NitT) (TC 3.A.1.16) family. As to quaternary structure, the complex is composed of two ATP-binding proteins (NrtC and NrtD), two transmembrane proteins (NrtB) and a solute-binding protein (NrtA).

It localises to the cell inner membrane. It carries out the reaction nitrate(out) + ATP + H2O = nitrate(in) + ADP + phosphate + H(+). In terms of biological role, part of the ABC transporter complex NrtABCD involved in nitrate uptake. The complex is probably also involved in nitrite transport. Probably responsible for energy coupling to the transport system. In Synechococcus elongatus (strain ATCC 33912 / PCC 7942 / FACHB-805) (Anacystis nidulans R2), this protein is Nitrate import ATP-binding protein NrtD.